The primary structure comprises 736 residues: Alpha-xylosidase A (736 aa).

An N-terminal signal peptide occupies residues 1–18 (MYFSSFLALGALVQAAAA). N-linked (GlcNAc...) asparagine glycosylation is found at Asn24, Asn279, Asn332, and Asn376. The active site involves Asp413. A glycan (N-linked (GlcNAc...) asparagine) is linked at Asn471. Asp505 functions as the Proton donor in the catalytic mechanism. 4 N-linked (GlcNAc...) asparagine glycosylation sites follow: Asn655, Asn676, Asn690, and Asn701.

It belongs to the glycosyl hydrolase 31 family.

It localises to the secreted. It catalyses the reaction Hydrolysis of terminal, non-reducing alpha-D-xylose residues with release of alpha-D-xylose.. Its function is as follows. Catalyzes the liberation of alpha-xylose from the non-reducing terminal glucose of xyloglucan oligosaccharides. This chain is Alpha-xylosidase A, found in Aspergillus niger (strain ATCC MYA-4892 / CBS 513.88 / FGSC A1513).